Reading from the N-terminus, the 723-residue chain is Probable G-protein coupled receptor 149 (723 aa).

Over 1–31 (MSVMPSNLSLNGTSFFAENHSIMDKPNEQRT) the chain is Extracellular. N-linked (GlcNAc...) asparagine glycans are attached at residues Asn-7, Asn-11, and Asn-19. A helical transmembrane segment spans residues 32 to 52 (LNVFLFCSTFIIAFTVLLGSI). Residues 53–69 (YSLVSLLKLQNKSTISM) lie on the Cytoplasmic side of the membrane. A helical transmembrane segment spans residues 70–90 (IVTSLSIDDLISIVPVIIFML). The Extracellular segment spans residues 91–106 (TQWSSDALPQPLCTTS). Cys-103 and Cys-181 are disulfide-bonded. The chain crosses the membrane as a helical span at residues 107–127 (ALIYLFQGISSNLKGSLIVSY). Residues 128 to 148 (NFYSINKTETMNCSASKRRVS) are Cytoplasmic-facing. The helical transmembrane segment at 149–169 (MVWAILSIWIVSLLICILPLC) threads the bilayer. Residues 170–188 (GWGKYIPTTWGCFTDHASS) lie on the Extracellular side of the membrane. The chain crosses the membrane as a helical span at residues 189-209 (YILFLFIVYSLCFCLLTVLSV). The Cytoplasmic portion of the chain corresponds to 210–306 (PLTYQLLCSD…SFTVGFAQKR (97 aa)). Residues 307–327 (FSLILALTKVILWLPMMIQMV) form a helical membrane-spanning segment. At 328–338 (VQHITGYQSFS) the chain is on the extracellular side. Residues 339 to 359 (FETLSFLLTLLAATVTPVFVL) form a helical membrane-spanning segment. The Cytoplasmic segment spans residues 360–723 (SEHWIHLPCG…RKREEDGNSN (364 aa)). A disordered region spans residues 451–513 (TTDSARPGPA…ERRLSHEEGH (63 aa)). The span at 501–513 (EGPERRLSHEEGH) shows a compositional bias: basic and acidic residues.

This sequence belongs to the G-protein coupled receptor 1 family. As to expression, specific expression in peripheral nervous system, including nerve growth factor-dependent sensory and sympathetic neurons, as well as enteric neurons.

Its subcellular location is the cell membrane. Functionally, orphan receptor. The sequence is that of Probable G-protein coupled receptor 149 (GPR149) from Gallus gallus (Chicken).